A 156-amino-acid chain; its full sequence is Low-salt glycan biosynthesis protein Agl8 (156 aa).

Residues R14–I15 and R47 each bind substrate. A Nudix hydrolase domain is found at A25–D156. 3 residues coordinate Mg(2+): G60, E80, and Q130. The Nudix box signature appears at G61–G82.

The protein belongs to the Nudix hydrolase family. Mg(2+) is required as a cofactor.

It functions in the pathway protein modification; protein glycosylation. It participates in cell surface structure biogenesis; S-layer biogenesis. Functionally, nudix hydrolase involved in N-glycan biosynthetic pathway that takes place under low-salt conditions (1.75 M instead of 3.4 M). Participates in the formation of the tetrasaccharide present at 'Asn-532' of S-layer glycoprotein Csg, consisting of a sulfated hexose, 2 hexoses and rhamnose. Mediates attachment of sugar 3 in the tetrasaccharide. This chain is Low-salt glycan biosynthesis protein Agl8 (agl8), found in Haloferax volcanii (strain ATCC 29605 / DSM 3757 / JCM 8879 / NBRC 14742 / NCIMB 2012 / VKM B-1768 / DS2) (Halobacterium volcanii).